The sequence spans 186 residues: ATP-dependent protease subunit HslV (186 aa).

Threonine 14 is a catalytic residue. Na(+) contacts are provided by alanine 168, cysteine 171, and threonine 174.

This sequence belongs to the peptidase T1B family. HslV subfamily. A double ring-shaped homohexamer of HslV is capped on each side by a ring-shaped HslU homohexamer. The assembly of the HslU/HslV complex is dependent on binding of ATP.

Its subcellular location is the cytoplasm. It catalyses the reaction ATP-dependent cleavage of peptide bonds with broad specificity.. Allosterically activated by HslU binding. In terms of biological role, protease subunit of a proteasome-like degradation complex believed to be a general protein degrading machinery. This chain is ATP-dependent protease subunit HslV, found in Bradyrhizobium sp. (strain ORS 278).